Consider the following 300-residue polypeptide: Geranylgeranyl pyrophosphate synthase (300 aa).

At M1 the chain carries N-acetylmethionine. Residues K25, R28, and H57 each coordinate isopentenyl diphosphate. D64 and D68 together coordinate Mg(2+). R73 contributes to the dimethylallyl diphosphate binding site. R74 is a binding site for isopentenyl diphosphate. Dimethylallyl diphosphate is bound by residues K151, T152, Q185, K202, and K212.

Belongs to the FPP/GGPP synthase family. In terms of assembly, homohexamer; trimer of homodimers. Mg(2+) is required as a cofactor.

It is found in the cytoplasm. The protein localises to the perinuclear region. The protein resides in the myofibril. It localises to the sarcomere. Its subcellular location is the z line. It catalyses the reaction isopentenyl diphosphate + dimethylallyl diphosphate = (2E)-geranyl diphosphate + diphosphate. The catalysed reaction is isopentenyl diphosphate + (2E)-geranyl diphosphate = (2E,6E)-farnesyl diphosphate + diphosphate. It carries out the reaction isopentenyl diphosphate + (2E,6E)-farnesyl diphosphate = (2E,6E,10E)-geranylgeranyl diphosphate + diphosphate. The protein operates within isoprenoid biosynthesis; farnesyl diphosphate biosynthesis; farnesyl diphosphate from geranyl diphosphate and isopentenyl diphosphate: step 1/1. Its pathway is isoprenoid biosynthesis; geranyl diphosphate biosynthesis; geranyl diphosphate from dimethylallyl diphosphate and isopentenyl diphosphate: step 1/1. It functions in the pathway isoprenoid biosynthesis; geranylgeranyl diphosphate biosynthesis; geranylgeranyl diphosphate from farnesyl diphosphate and isopentenyl diphosphate: step 1/1. In terms of biological role, catalyzes the trans-addition of the three molecules of isopentenyl diphosphate (IPP) onto dimethylallyl pyrophosphate (DMAPP) to form geranylgeranyl pyrophosphate, an important precursor of carotenoids and geranylated proteins. The protein is Geranylgeranyl pyrophosphate synthase of Mus musculus (Mouse).